The following is a 199-amino-acid chain: ATP-dependent Clp protease proteolytic subunit 2 (199 aa).

S98 serves as the catalytic Nucleophile. H123 is a catalytic residue.

It belongs to the peptidase S14 family. As to quaternary structure, fourteen ClpP subunits assemble into 2 heptameric rings which stack back to back to give a disk-like structure with a central cavity, resembling the structure of eukaryotic proteasomes.

The protein resides in the cytoplasm. It carries out the reaction Hydrolysis of proteins to small peptides in the presence of ATP and magnesium. alpha-casein is the usual test substrate. In the absence of ATP, only oligopeptides shorter than five residues are hydrolyzed (such as succinyl-Leu-Tyr-|-NHMec, and Leu-Tyr-Leu-|-Tyr-Trp, in which cleavage of the -Tyr-|-Leu- and -Tyr-|-Trp bonds also occurs).. In terms of biological role, cleaves peptides in various proteins in a process that requires ATP hydrolysis. Has a chymotrypsin-like activity. Plays a major role in the degradation of misfolded proteins. The sequence is that of ATP-dependent Clp protease proteolytic subunit 2 from Treponema pallidum (strain Nichols).